A 318-amino-acid chain; its full sequence is Tyrosine--tRNA ligase (318 aa).

Tyr-35 is an L-tyrosine binding site. The 'HIGH' region motif lies at 40 to 48; that stretch reads PSGKVHLGH. Residues Tyr-154, Gln-158, Asp-161, and Gln-176 each coordinate L-tyrosine. The short motif at 211–215 is the 'KMSKS' region element; that stretch reads KMSSS. Ser-214 is an ATP binding site.

Belongs to the class-I aminoacyl-tRNA synthetase family. TyrS type 3 subfamily. Homodimer.

The protein localises to the cytoplasm. It catalyses the reaction tRNA(Tyr) + L-tyrosine + ATP = L-tyrosyl-tRNA(Tyr) + AMP + diphosphate + H(+). Its function is as follows. Catalyzes the attachment of tyrosine to tRNA(Tyr) in a two-step reaction: tyrosine is first activated by ATP to form Tyr-AMP and then transferred to the acceptor end of tRNA(Tyr). This chain is Tyrosine--tRNA ligase, found in Methanosphaera stadtmanae (strain ATCC 43021 / DSM 3091 / JCM 11832 / MCB-3).